Consider the following 502-residue polypeptide: Glycerol kinase (502 aa).

Threonine 14 is an ADP binding site. 3 residues coordinate ATP: threonine 14, threonine 15, and serine 16. Threonine 14 serves as a coordination point for sn-glycerol 3-phosphate. Arginine 18 serves as a coordination point for ADP. Sn-glycerol 3-phosphate-binding residues include arginine 84, glutamate 85, and tyrosine 136. Glycerol-binding residues include arginine 84, glutamate 85, and tyrosine 136. Histidine 232 is subject to Phosphohistidine; by HPr. Sn-glycerol 3-phosphate is bound at residue aspartate 246. Residues aspartate 246 and glutamine 247 each contribute to the glycerol site. 2 residues coordinate ADP: threonine 268 and glycine 311. The ATP site is built by threonine 268, glycine 311, glutamine 315, and glycine 412. Residues glycine 412 and asparagine 416 each coordinate ADP.

Belongs to the FGGY kinase family. As to quaternary structure, homotetramer and homodimer (in equilibrium). Post-translationally, the phosphoenolpyruvate-dependent sugar phosphotransferase system (PTS), including enzyme I, and histidine-containing protein (HPr) are required for the phosphorylation, which leads to the activation of the enzyme.

It carries out the reaction glycerol + ATP = sn-glycerol 3-phosphate + ADP + H(+). Its pathway is polyol metabolism; glycerol degradation via glycerol kinase pathway; sn-glycerol 3-phosphate from glycerol: step 1/1. With respect to regulation, activated by phosphorylation and inhibited by fructose 1,6-bisphosphate (FBP). Functionally, key enzyme in the regulation of glycerol uptake and metabolism. Catalyzes the phosphorylation of glycerol to yield sn-glycerol 3-phosphate. This is Glycerol kinase from Streptococcus pneumoniae (strain Hungary19A-6).